The sequence spans 419 residues: UDP-N-acetylglucosamine 1-carboxyvinyltransferase 2 (419 aa).

A phosphoenolpyruvate-binding site is contributed by 24–25 (KN). R94 lines the UDP-N-acetyl-alpha-D-glucosamine pocket. Catalysis depends on C118, which acts as the Proton donor. Position 118 is a 2-(S-cysteinyl)pyruvic acid O-phosphothioketal (C118). UDP-N-acetyl-alpha-D-glucosamine is bound by residues 123–127 (RPIDQ), D307, and I329.

It belongs to the EPSP synthase family. MurA subfamily.

The protein localises to the cytoplasm. The enzyme catalyses phosphoenolpyruvate + UDP-N-acetyl-alpha-D-glucosamine = UDP-N-acetyl-3-O-(1-carboxyvinyl)-alpha-D-glucosamine + phosphate. The protein operates within cell wall biogenesis; peptidoglycan biosynthesis. Functionally, cell wall formation. Adds enolpyruvyl to UDP-N-acetylglucosamine. The polypeptide is UDP-N-acetylglucosamine 1-carboxyvinyltransferase 2 (Staphylococcus aureus (strain bovine RF122 / ET3-1)).